Here is a 561-residue protein sequence, read N- to C-terminus: Asparagine synthetase [glutamine-hydrolyzing] (561 aa).

The active-site For GATase activity is cysteine 2. The Glutamine amidotransferase type-2 domain maps to 2 to 191; that stretch reads CGIWALFGSD…PGHYEVLDLK (190 aa). Residues 49–53, 75–77, and aspartate 97 each bind L-glutamine; these read RLAVV and NGE. The region spanning 213–536 is the Asparagine synthetase domain; that stretch reads HAIYDSVEKL…PGRADWLTHY (324 aa). ATP is bound by residues leucine 256, isoleucine 288, and 363-364; that span reads SG. An N6-acetyllysine modification is found at lysine 385. Threonine 545 bears the Phosphothreonine mark. Serine 557 is subject to Phosphoserine.

The enzyme catalyses L-aspartate + L-glutamine + ATP + H2O = L-asparagine + L-glutamate + AMP + diphosphate + H(+). It participates in amino-acid biosynthesis; L-asparagine biosynthesis; L-asparagine from L-aspartate (L-Gln route): step 1/1. The chain is Asparagine synthetase [glutamine-hydrolyzing] (Asns) from Mus musculus (Mouse).